A 257-amino-acid polypeptide reads, in one-letter code: Mitochondrial distribution and morphology protein 12 (257 aa).

In terms of domain architecture, SMP-LTD spans 1–256; the sequence is MSFEINWEKL…WPSWVNLDFN (256 aa). Positions 74–98 are disordered; sequence YEEDNETSSEMHGRDGQNVGESGEE.

This sequence belongs to the MDM12 family. In terms of assembly, component of the ER-mitochondria encounter structure (ERMES) or MDM complex, composed of MMM1, MDM10, MDM12 and MDM34. An MMM1 homodimer associates with one molecule of MDM12 on each side in a pairwise head-to-tail manner, and the SMP-LTD domains of MMM1 and MDM12 generate a continuous hydrophobic tunnel for phospholipid trafficking.

The protein localises to the mitochondrion outer membrane. The protein resides in the endoplasmic reticulum membrane. In terms of biological role, component of the ERMES/MDM complex, which serves as a molecular tether to connect the endoplasmic reticulum (ER) and mitochondria. Components of this complex are involved in the control of mitochondrial shape and protein biogenesis, and function in nonvesicular lipid trafficking between the ER and mitochondria. MDM12 is required for the interaction of the ER-resident membrane protein MMM1 and the outer mitochondrial membrane-resident beta-barrel protein MDM10. The MDM12-MMM1 subcomplex functions in the major beta-barrel assembly pathway that is responsible for biogenesis of all mitochondrial outer membrane beta-barrel proteins, and acts in a late step after the SAM complex. The MDM10-MDM12-MMM1 subcomplex further acts in the TOM40-specific pathway after the action of the MDM12-MMM1 complex. Essential for establishing and maintaining the structure of mitochondria and maintenance of mtDNA nucleoids. The protein is Mitochondrial distribution and morphology protein 12 of Candida glabrata (strain ATCC 2001 / BCRC 20586 / JCM 3761 / NBRC 0622 / NRRL Y-65 / CBS 138) (Yeast).